Reading from the N-terminus, the 426-residue chain is Cytochrome b-c1 complex subunit 2, mitochondrial (426 aa).

The transit peptide at 1–30 (MKSFTRNLRRFQTPRRNLHGISYTPKKVEG) directs the protein to the mitochondrion.

It belongs to the peptidase M16 family. UQCRC2/QCR2 subfamily. In terms of assembly, component of the ubiquinol-cytochrome c oxidoreductase (cytochrome b-c1 complex, complex III, CIII), a multisubunit enzyme composed of 3 respiratory subunits cytochrome b, cytochrome c1 and Rieske protein, 2 core protein subunits, and additional low-molecular weight protein subunits. The complex exists as an obligatory dimer and forms supercomplexes (SCs) in the inner mitochondrial membrane with cytochrome c oxidase (complex IV, CIV).

The protein resides in the mitochondrion inner membrane. In terms of biological role, component of the ubiquinol-cytochrome c oxidoreductase, a multisubunit transmembrane complex that is part of the mitochondrial electron transport chain which drives oxidative phosphorylation. The respiratory chain contains 3 multisubunit complexes succinate dehydrogenase (complex II, CII), ubiquinol-cytochrome c oxidoreductase (cytochrome b-c1 complex, complex III, CIII) and cytochrome c oxidase (complex IV, CIV), that cooperate to transfer electrons derived from NADH and succinate to molecular oxygen, creating an electrochemical gradient over the inner membrane that drives transmembrane transport and the ATP synthase. The cytochrome b-c1 complex catalyzes electron transfer from ubiquinol to cytochrome c, linking this redox reaction to translocation of protons across the mitochondrial inner membrane, with protons being carried across the membrane as hydrogens on the quinol. In the process called Q cycle, 2 protons are consumed from the matrix, 4 protons are released into the intermembrane space and 2 electrons are passed to cytochrome c. The protein is Cytochrome b-c1 complex subunit 2, mitochondrial (qcr2) of Schizosaccharomyces pombe (strain 972 / ATCC 24843) (Fission yeast).